The following is a 349-amino-acid chain: tRNA pseudouridine synthase D (349 aa).

Residue Phe27 participates in substrate binding. Asp80 (nucleophile) is an active-site residue. Substrate is bound at residue Asn129. The TRUD domain occupies 155-303; the sequence is GVPNYFGAQR…VEAARRAMLL (149 aa). Position 329 (Phe329) interacts with substrate.

The protein belongs to the pseudouridine synthase TruD family.

It catalyses the reaction uridine(13) in tRNA = pseudouridine(13) in tRNA. Responsible for synthesis of pseudouridine from uracil-13 in transfer RNAs. The polypeptide is tRNA pseudouridine synthase D (Citrobacter koseri (strain ATCC BAA-895 / CDC 4225-83 / SGSC4696)).